Consider the following 600-residue polypeptide: Aspartate--tRNA(Asp/Asn) ligase (600 aa).

L-aspartate is bound at residue Glu174. Residues 198–201 are aspartate; it reads QLFK. Arg220 is a binding site for L-aspartate. ATP is bound by residues 220-222 and Gln229; that span reads RDE. His457 is an L-aspartate binding site. Residue Glu491 coordinates ATP. Arg498 serves as a coordination point for L-aspartate. An ATP-binding site is contributed by 543–546; sequence GLDR.

It belongs to the class-II aminoacyl-tRNA synthetase family. Type 1 subfamily. Homodimer.

Its subcellular location is the cytoplasm. It carries out the reaction tRNA(Asx) + L-aspartate + ATP = L-aspartyl-tRNA(Asx) + AMP + diphosphate. In terms of biological role, aspartyl-tRNA synthetase with relaxed tRNA specificity since it is able to aspartylate not only its cognate tRNA(Asp) but also tRNA(Asn). Reaction proceeds in two steps: L-aspartate is first activated by ATP to form Asp-AMP and then transferred to the acceptor end of tRNA(Asp/Asn). The chain is Aspartate--tRNA(Asp/Asn) ligase from Burkholderia multivorans (strain ATCC 17616 / 249).